The primary structure comprises 981 residues: uncharacterized protein (981 aa).

In terms of domain architecture, Carrier spans 535–612; the sequence is VLLNPVAIEI…SIASIIQKKS (78 aa). Ser571 bears the O-(pantetheine 4'-phosphoryl)serine mark.

Belongs to the ATP-dependent AMP-binding enzyme family.

This is an uncharacterized protein from Schizosaccharomyces pombe (strain 972 / ATCC 24843) (Fission yeast).